We begin with the raw amino-acid sequence, 997 residues long: Pro-apoptotic serine protease NMA111 (997 aa).

Residues 1–43 (MTISLSNIKKRDHSKISDGTSGESSLVKRKQLESATGDQEEEY) are disordered. The interval 83-273 (VVSIHFSQVA…LPLDRILRAL (191 aa)) is serine protease. Catalysis depends on charge relay system residues His121, Asp152, and Ser235. PDZ domains lie at 300–378 (RRLG…QRGG) and 779–854 (EEWI…VRDG).

It belongs to the peptidase S1C family. In terms of assembly, interacts with BIR1.

It is found in the nucleus. Functionally, nuclear serine protease which mediates apoptosis through proteolysis of the apoptotic inhibitor BIR1. This is Pro-apoptotic serine protease NMA111 (NMA111) from Saccharomyces cerevisiae (strain YJM789) (Baker's yeast).